The primary structure comprises 410 residues: Arginine deiminase (410 aa).

Cys-400 (amidino-cysteine intermediate) is an active-site residue.

It belongs to the arginine deiminase family.

Its subcellular location is the cytoplasm. It catalyses the reaction L-arginine + H2O = L-citrulline + NH4(+). It functions in the pathway amino-acid degradation; L-arginine degradation via ADI pathway; carbamoyl phosphate from L-arginine: step 1/2. The chain is Arginine deiminase from Bacillus cytotoxicus (strain DSM 22905 / CIP 110041 / 391-98 / NVH 391-98).